The following is a 565-amino-acid chain: MRSDTIKTGFEKAPHRSLLKATGTIKEKGDYRKPFIGICNSFNELIPGHAHLQELGRIAKEEVRKAGGVPFEFNTIGVCDGIAMGHIGMRYSLASRELIADSVETVAEAHRLDGLVCIPNCDKITPGMMMAALRINIPVIFVSGGPMKAGCTPSGKTVDLISVFEAVGQHSTGEISEQELESIEENACPGCGSCSGMFTANSMNCLSEALGFALPGNGTILAVDPRRNELVREASRQIITLVKNNVRPRDILSREALLNAFALDFAMGGSTNTILHTLAIANEAELDFDFSELNALSARTPYICKVSPATMAVHIEDVDRAGGISAILHELSKVEGLLDLSVPTVTGHTLGENIADAEVKDRSVIRSVEDPYSATGGLCVLYGNLAPQGSVIKTGAVSAPMMKHTGPAKVYDCQDDAIKGIMEGEVKSGDVVVIRYEGPKGGPGMPEMLSPTSVIMGRGLGDSVALITDGRFSGGSRGACIGHISPEAAEKGPIAALQNGDTITIDIPGRTISVDLTDEDIASRIAALPDFQPKIKKGYLARYSQMVTSASTGAILKTPVSCEPK.

Residue Asp-80 participates in Mg(2+) binding. Cys-121 contacts [2Fe-2S] cluster. Residues Asp-122 and Lys-123 each contribute to the Mg(2+) site. Lys-123 is modified (N6-carboxylysine). Cys-194 contacts [2Fe-2S] cluster. Glu-447 serves as a coordination point for Mg(2+). The active-site Proton acceptor is Ser-473.

Belongs to the IlvD/Edd family. Homodimer. [2Fe-2S] cluster is required as a cofactor. Mg(2+) serves as cofactor.

It carries out the reaction (2R)-2,3-dihydroxy-3-methylbutanoate = 3-methyl-2-oxobutanoate + H2O. The catalysed reaction is (2R,3R)-2,3-dihydroxy-3-methylpentanoate = (S)-3-methyl-2-oxopentanoate + H2O. It functions in the pathway amino-acid biosynthesis; L-isoleucine biosynthesis; L-isoleucine from 2-oxobutanoate: step 3/4. It participates in amino-acid biosynthesis; L-valine biosynthesis; L-valine from pyruvate: step 3/4. Functionally, functions in the biosynthesis of branched-chain amino acids. Catalyzes the dehydration of (2R,3R)-2,3-dihydroxy-3-methylpentanoate (2,3-dihydroxy-3-methylvalerate) into 2-oxo-3-methylpentanoate (2-oxo-3-methylvalerate) and of (2R)-2,3-dihydroxy-3-methylbutanoate (2,3-dihydroxyisovalerate) into 2-oxo-3-methylbutanoate (2-oxoisovalerate), the penultimate precursor to L-isoleucine and L-valine, respectively. This Chlorobium phaeovibrioides (strain DSM 265 / 1930) (Prosthecochloris vibrioformis (strain DSM 265)) protein is Dihydroxy-acid dehydratase.